The following is a 584-amino-acid chain: Alpha-glucosidase MAL12 (584 aa).

Asp-214 acts as the Nucleophile in catalysis. Glu-276 (proton donor) is an active-site residue.

This sequence belongs to the glycosyl hydrolase 13 family.

The catalysed reaction is Hydrolysis of terminal, non-reducing (1-&gt;4)-linked alpha-D-glucose residues with release of alpha-D-glucose.. This chain is Alpha-glucosidase MAL12 (MAL12), found in Saccharomyces cerevisiae (strain ATCC 204508 / S288c) (Baker's yeast).